The sequence spans 300 residues: Ribosomal protein bS6--L-glutamate ligase (300 aa).

The ATP-grasp domain maps to 104-287; the sequence is MQLLARQGID…IASKMIRWIE (184 aa). ATP contacts are provided by residues lysine 141, 178-179, aspartate 187, and 211-213; these read EY and RSN. Mg(2+)-binding residues include aspartate 248, glutamate 260, and asparagine 262. Mn(2+)-binding residues include aspartate 248, glutamate 260, and asparagine 262.

This sequence belongs to the RimK family. The cofactor is Mg(2+). Mn(2+) serves as cofactor.

Its function is as follows. An L-glutamate ligase that catalyzes the ATP-dependent post-translational addition of glutamate residues to the C-terminus of ribosomal protein bS6 (RpsF). Is also able to catalyze the synthesis of poly-alpha-glutamate in vitro, via ATP hydrolysis from unprotected glutamate as substrate. The number of glutamate residues added to either RpsF or to poly-alpha-glutamate changes with pH. This Escherichia coli O81 (strain ED1a) protein is Ribosomal protein bS6--L-glutamate ligase.